Consider the following 401-residue polypeptide: uncharacterized protein (401 aa).

This is an uncharacterized protein from Acanthamoeba polyphaga mimivirus (APMV).